The sequence spans 2207 residues: Genome polyprotein (2207 aa).

Gly-2 is lipidated: N-myristoyl glycine; by host. The Cytoplasmic portion of the chain corresponds to 2-1518; sequence GAQVSSQKVG…NINRAMTILQ (1517 aa). The interval 579–599 is amphipathic alpha-helix; that stretch reads GLGDLIEGVVEGVTRNALTPL. Positions 597-613 are enriched in polar residues; that stretch reads TPLTPANNLPDTQSSGP. 2 disordered regions span residues 597-620 and 628-647; these read TPLT…KETP and GATN…VIQK. Catalysis depends on for protease 2A activity residues His-899 and Asp-917. Cys-934 and Cys-936 together coordinate Zn(2+). Cys-988 acts as the For protease 2A activity in catalysis. 2 residues coordinate Zn(2+): Cys-994 and His-996. The membrane-binding stretch occupies residues 1126-1198; it reads GDSWLKKFTE…HQSCPSQEHQ (73 aa). The interval 1126–1264 is oligomerization; the sequence is GDSWLKKFTE…SPGTGKSVAT (139 aa). An RNA-binding region spans residues 1147-1151; the sequence is SNKIS. Positions 1230 to 1386 constitute an SF3 helicase domain; that stretch reads EHTINNYVQF…SEYSRDGKLN (157 aa). 1254–1261 lines the ATP pocket; the sequence is GSPGTGKS. Cys-1394, Cys-1397, Cys-1406, and Cys-1411 together coordinate Zn(2+). Residues 1394-1411 form a C4-type zinc finger; it reads CKNCHHPANFKRCCPLVC. An RNA-binding region spans residues 1438–1445; that stretch reads ERNRRSSI. The oligomerization stretch occupies residues 1449–1454; sequence MEALFQ. Residues 1519–1534 lie within the membrane without spanning it; that stretch reads AVTTFAAVAGVVYVMY. Residues 1535-2207 are Cytoplasmic-facing; it reads KLFAGHQGAY…TLYRRWLDSF (673 aa). Position 1544 is an O-(5'-phospho-RNA)-tyrosine (Tyr-1544). The Peptidase C3 domain maps to 1564-1742; that stretch reads GPGFDYAVAM…FAAALKRSYF (179 aa). Catalysis depends on for protease 3C activity residues His-1603, Glu-1634, and Cys-1710. Residues 1973-2088 enclose the RdRp catalytic domain; sequence EKLFAFDYTG…SYPHEVDASL (116 aa). The Mg(2+) site is built by Asp-1979 and Asp-2074.

The protein belongs to the picornaviruses polyprotein family. As to quaternary structure, interacts with capsid protein VP1 and capsid protein VP3 to form heterotrimeric protomers. In terms of assembly, interacts with capsid protein VP0, and capsid protein VP3 to form heterotrimeric protomers. Interacts with human PVR. Five protomers subsequently associate to form pentamers which serve as building blocks for the capsid. Interacts with capsid protein VP2, capsid protein VP3 and capsid protein VP4 following cleavage of capsid protein VP0. Interacts with capsid protein VP1 and capsid protein VP3 in the mature capsid. As to quaternary structure, interacts with capsid protein VP0 and capsid protein VP1 to form heterotrimeric protomers. Five protomers subsequently associate to form pentamers which serve as building blocks for the capsid. Interacts with capsid protein VP4 in the mature capsid. Interacts with protein 2C; this interaction may be important for virion morphogenesis. In terms of assembly, interacts with capsid protein VP1 and capsid protein VP3. Homodimer. As to quaternary structure, homohexamer; forms a hexameric ring structure with 6-fold symmetry characteristic of AAA+ ATPases. Interacts (via N-terminus) with host RTN3 (via reticulon domain); this interaction is important for viral replication. Interacts with capsid protein VP3; this interaction may be important for virion morphogenesis. In terms of assembly, interacts with protein 3CD. Homodimer. Interacts with host GBF1. Interacts (via GOLD domain) with host ACBD3 (via GOLD domain); this interaction allows the formation of a viral protein 3A/ACBD3 heterotetramer with a 2:2 stoichiometry, which will stimulate the recruitment of host PI4KB in order to synthesize PI4P at the viral RNA replication sites. As to quaternary structure, interacts with RNA-directed RNA polymerase. In terms of assembly, interacts with protein 3AB and with RNA-directed RNA polymerase. Interacts with Viral protein genome-linked and with protein 3CD. The cofactor is Mg(2+). Specific enzymatic cleavages in vivo by the viral proteases yield processing intermediates and the mature proteins. Post-translationally, myristoylation is required for the formation of pentamers during virus assembly. Further assembly of 12 pentamers and a molecule of genomic RNA generates the provirion. In terms of processing, during virion maturation, immature virions are rendered infectious following cleavage of VP0 into VP4 and VP2. This maturation seems to be an autocatalytic event triggered by the presence of RNA in the capsid and it is followed by a conformational change infectious virion. Myristoylation is required during RNA encapsidation and formation of the mature virus particle. Post-translationally, VPg is uridylylated by the polymerase into VPg-pUpU. This acts as a nucleotide-peptide primer for the genomic RNA replication.

The protein resides in the virion. The protein localises to the host cytoplasm. It is found in the host cytoplasmic vesicle membrane. It localises to the host nucleus. It carries out the reaction a ribonucleoside 5'-triphosphate + H2O = a ribonucleoside 5'-diphosphate + phosphate + H(+). The catalysed reaction is Selective cleavage of Tyr-|-Gly bond in the picornavirus polyprotein.. It catalyses the reaction RNA(n) + a ribonucleoside 5'-triphosphate = RNA(n+1) + diphosphate. The enzyme catalyses Selective cleavage of Gln-|-Gly bond in the poliovirus polyprotein. In other picornavirus reactions Glu may be substituted for Gln, and Ser or Thr for Gly.. Replication or transcription is subject to high level of random mutations by the nucleotide analog ribavirin. Its function is as follows. Forms an icosahedral capsid of pseudo T=3 symmetry with capsid proteins VP2 and VP3. The capsid is 300 Angstroms in diameter, composed of 60 copies of each capsid protein and enclosing the viral positive strand RNA genome. Capsid protein VP1 mainly forms the vertices of the capsid. Capsid protein VP1 interacts with host cell receptor PVR to provide virion attachment to target host cells. This attachment induces virion internalization predominantly through clathrin- and caveolin-independent endocytosis in Hela cells and through caveolin-mediated endocytosis in brain microvascular endothelial cells. Tyrosine kinases are probably involved in the entry process. Virus binding to PVR induces increased junctional permeability and rearrangement of junctional proteins. Modulation of endothelial tight junctions, as well as cytolytic infection of endothelial cells themselves, may result in loss of endothelial integrity which may help the virus to reach the CNS. After binding to its receptor, the capsid undergoes conformational changes. Capsid protein VP1 N-terminus (that contains an amphipathic alpha-helix) and capsid protein VP4 are externalized. Together, they shape a pore in the host membrane through which viral genome is translocated to host cell cytoplasm. Functionally, forms an icosahedral capsid of pseudo T=3 symmetry with capsid proteins VP2 and VP3. The capsid is 300 Angstroms in diameter, composed of 60 copies of each capsid protein and enclosing the viral positive strand RNA genome. In terms of biological role, lies on the inner surface of the capsid shell. After binding to the host receptor, the capsid undergoes conformational changes. Capsid protein VP4 is released, Capsid protein VP1 N-terminus is externalized, and together, they shape a pore in the host membrane through which the viral genome is translocated into the host cell cytoplasm. Component of immature procapsids, which is cleaved into capsid proteins VP4 and VP2 after maturation. Allows the capsid to remain inactive before the maturation step. Its function is as follows. Cysteine protease that cleaves viral polyprotein and specific host proteins. It is responsible for the autocatalytic cleavage between the P1 and P2 regions, which is the first cleavage occurring in the polyprotein. Also cleaves the host translation initiation factor EIF4G1, in order to shut down the capped cellular mRNA translation. Inhibits the host nucleus-cytoplasm protein and RNA trafficking by cleaving host members of the nuclear pores including NUP98, NUP62 and NUP153. Counteracts stress granule formation probably by antagonizing its assembly or promoting its dissassembly. Cleaves and inhibits host IFIH1/MDA5, thereby inhibiting the type-I IFN production and the establishment of the antiviral state. Cleaves and inhibits host MAVS, thereby inhibiting the type-I IFN production and the establishment of the antiviral state. Functionally, plays an essential role in the virus replication cycle by acting as a viroporin. Creates a pore in the host endoplasmic reticulum and as a consequence releases Ca2+ in the cytoplasm of infected cell. In turn, high levels of cytoplasmic calcium may trigger membrane trafficking and transport of viral ER-associated proteins to viroplasms, sites of viral genome replication. In terms of biological role, induces and associates with structural rearrangements of intracellular membranes. Displays RNA-binding, nucleotide binding and NTPase activities. May play a role in virion morphogenesis and viral RNA encapsidation by interacting with the capsid protein VP3. Localizes the viral replication complex to the surface of membranous vesicles. Together with protein 3CD binds the Cis-Active RNA Element (CRE) which is involved in RNA synthesis initiation. Acts as a cofactor to stimulate the activity of 3D polymerase, maybe through a nucleid acid chaperone activity. Its function is as follows. Localizes the viral replication complex to the surface of membranous vesicles. It inhibits host cell endoplasmic reticulum-to-Golgi apparatus transport and causes the disassembly of the Golgi complex, possibly through GBF1 interaction. This would result in depletion of MHC, trail receptors and IFN receptors at the host cell surface. Plays an essential role in viral RNA replication by recruiting ACBD3 and PI4KB at the viral replication sites, thereby allowing the formation of the rearranged membranous structures where viral replication takes place. Functionally, acts as a primer for viral RNA replication and remains covalently bound to viral genomic RNA. VPg is uridylylated prior to priming replication into VPg-pUpU. The oriI viral genomic sequence may act as a template for this. The VPg-pUpU is then used as primer on the genomic RNA poly(A) by the RNA-dependent RNA polymerase to replicate the viral genome. During genome replication, the VPg-RNA linkage is removed by the host TDP2, thereby accelerating replication. During the late stage of the replication cycle, host TDP2 is excluded from sites of viral RNA synthesis and encapsidation, allowing for the generation of progeny virions. In terms of biological role, involved in the viral replication complex and viral polypeptide maturation. It exhibits protease activity with a specificity and catalytic efficiency that is different from protease 3C. Protein 3CD lacks polymerase activity. Protein 3CD binds to the 5'UTR of the viral genome. Major viral protease that mediates proteolytic processing of the polyprotein. Cleaves host EIF5B, contributing to host translation shutoff. Also cleaves host PABPC1, contributing to host translation shutoff. Cleaves host RIGI and thus contributes to the inhibition of type I interferon production. Cleaves host NLRP1, triggers host N-glycine-mediated degradation of the autoinhibitory NLRP1 N-terminal fragment. Inhibits the integrated stress response (ISR) in the infected cell by cleaving host G3BP1. Stress granule formation is thus inhibited, which allows protein synthesis and viral replication. Its function is as follows. Replicates the viral genomic RNA on the surface of intracellular membranes. May form linear arrays of subunits that propagate along a strong head-to-tail interaction called interface-I. Covalently attaches UMP to a tyrosine of VPg, which is used to prime RNA synthesis. The positive stranded RNA genome is first replicated at virus induced membranous vesicles, creating a dsRNA genomic replication form. This dsRNA is then used as template to synthesize positive stranded RNA genomes. ss(+)RNA genomes are either translated, replicated or encapsidated. The protein is Genome polyprotein of Homo sapiens (Human).